The following is a 44-amino-acid chain: Alpha-amylase inhibitor magnificamide (44 aa).

Cystine bridges form between C6-C38, C16-C33, and C20-C39. An inhibitory motif region spans residues 7 to 10; sequence YIYH.

Belongs to the sea anemone alpha-amylase inhibitor family.

The protein resides in the secreted. Functionally, mammalian alpha-amylase (AMY2A) inhibitor. The recombinant peptide inhibits porcine pancreatic (Ki=0.17 nM) and human saliva alpha-amylases (Ki=7.7 nM). It does not show antimicrobial (tested on fungi and bacteria) or channel modulating activities (tested on 18 voltage-gated sodium and potassium channles). In Heteractis magnifica (Magnificent sea anemone), this protein is Alpha-amylase inhibitor magnificamide.